A 145-amino-acid chain; its full sequence is I-leader protein (145 aa).

The protein belongs to the adenoviridae leader protein family.

It is found in the host cytoplasm. The protein localises to the host perinuclear region. The protein is I-leader protein of Human adenovirus C serotype 5 (HAdV-5).